The sequence spans 118 residues: cAMP-responsive element-binding protein-like 2 (118 aa).

Residues M1–D25 are disordered. Over residues K10–P21 the composition is skewed to basic residues. One can recognise a bZIP domain in the interval K23–S86. The segment at K29–R60 is basic motif. Residues I62 to L69 form a leucine-zipper region.

This sequence belongs to the bZIP family. ATF subfamily.

The protein resides in the nucleus. Functionally, probable regulator of creb1 transcriptional activity which is involved in adipose cells differentiation. May also play a regulatory role in the cell cycle. This chain is cAMP-responsive element-binding protein-like 2 (crebl2), found in Xenopus tropicalis (Western clawed frog).